Here is a 367-residue protein sequence, read N- to C-terminus: NADH-quinone oxidoreductase subunit D (367 aa).

This sequence belongs to the complex I 49 kDa subunit family. In terms of assembly, NDH-1 is composed of 14 different subunits. Subunits NuoB, C, D, E, F, and G constitute the peripheral sector of the complex.

It is found in the cell inner membrane. The enzyme catalyses a quinone + NADH + 5 H(+)(in) = a quinol + NAD(+) + 4 H(+)(out). In terms of biological role, NDH-1 shuttles electrons from NADH, via FMN and iron-sulfur (Fe-S) centers, to quinones in the respiratory chain. The immediate electron acceptor for the enzyme in this species is believed to be ubiquinone. Couples the redox reaction to proton translocation (for every two electrons transferred, four hydrogen ions are translocated across the cytoplasmic membrane), and thus conserves the redox energy in a proton gradient. In Thermosipho melanesiensis (strain DSM 12029 / CIP 104789 / BI429), this protein is NADH-quinone oxidoreductase subunit D.